The sequence spans 245 residues: SPX domain-containing protein 3 (245 aa).

The region spanning 1-142 (MKFGKRIKEQ…RGGLRSPFIQ (142 aa)) is the SPX domain.

Plays a positive role in plant adaptation to phosphate starvation and exerts negative feedback regulation of SPX1. The sequence is that of SPX domain-containing protein 3 (SPX3) from Arabidopsis thaliana (Mouse-ear cress).